The chain runs to 176 residues: Large ribosomal subunit protein uL30 (176 aa).

Belongs to the universal ribosomal protein uL30 family. In terms of assembly, part of the 50S ribosomal subunit.

The chain is Large ribosomal subunit protein uL30 from Pyrobaculum arsenaticum (strain DSM 13514 / JCM 11321 / PZ6).